The following is a 215-amino-acid chain: Urease accessory protein UreG 2 (215 aa).

11-18 (GPVGSGKT) is a GTP binding site.

Belongs to the SIMIBI class G3E GTPase family. UreG subfamily. As to quaternary structure, homodimer. UreD, UreF and UreG form a complex that acts as a GTP-hydrolysis-dependent molecular chaperone, activating the urease apoprotein by helping to assemble the nickel containing metallocenter of UreC. The UreE protein probably delivers the nickel.

It localises to the cytoplasm. Functionally, facilitates the functional incorporation of the urease nickel metallocenter. This process requires GTP hydrolysis, probably effectuated by UreG. The chain is Urease accessory protein UreG 2 from Methylorubrum extorquens (strain PA1) (Methylobacterium extorquens).